The sequence spans 418 residues: ADP-ribose glycohydrolase MACROD2 (418 aa).

The 182-residue stretch at 57–238 folds into the Macro domain; the sequence is PEEIQVKNSL…IYKRKLNEFF (182 aa). Residues 75-77, 88-90, 95-100, 183-189, and Phe222 each bind substrate; these read GDI, AAN, GGGGVD, and ISTGIYG. The disordered stretch occupies residues 238–418; it reads FPKDGGDDEE…KDTNDDANEA (181 aa). Residues 250-262 show a composition bias toward basic and acidic residues; sequence KGDSDEMKEDTEG. Residues 295–318 show a composition bias toward polar residues; sequence TGNTQDMTAMSLETNEGNDVSSPA. A compositionally biased stretch (basic and acidic residues) spans 321–360; sequence PLKEGEELSEAKITGEKISVEPKTPEPEDAKMTVEEKSQE. Positions 377–389 are enriched in acidic residues; it reads ETEDLDGDSEEPS.

Belongs to the MacroD-type family. MacroD1/2-like subfamily.

The protein resides in the nucleus. The catalysed reaction is 2''-O-acetyl-ADP-D-ribose + H2O = ADP-D-ribose + acetate + H(+). It carries out the reaction 4-O-(ADP-D-ribosyl)-L-aspartyl-[protein] + H2O = L-aspartyl-[protein] + ADP-D-ribose + H(+). It catalyses the reaction 5-O-(ADP-D-ribosyl)-L-glutamyl-[protein] + H2O = L-glutamyl-[protein] + ADP-D-ribose + H(+). The enzyme catalyses alpha-NAD(+) + H2O = ADP-D-ribose + nicotinamide + H(+). Its activity is regulated as follows. Subject to product inhibition by ADP-ribose. Its function is as follows. Removes ADP-ribose from aspartate and glutamate residues in proteins bearing a single ADP-ribose moiety. Inactive towards proteins bearing poly-ADP-ribose. Deacetylates O-acetyl-ADP ribose, a signaling molecule generated by the deacetylation of acetylated lysine residues in histones and other proteins. The polypeptide is ADP-ribose glycohydrolase MACROD2 (Xenopus laevis (African clawed frog)).